The following is a 73-amino-acid chain: Maltose-binding periplasmic protein (73 aa).

The first 30 residues, methionine 1–alanine 30, serve as a signal peptide directing secretion.

The protein belongs to the bacterial solute-binding protein 1 family.

Its subcellular location is the periplasm. Functionally, involved in the high-affinity maltose membrane transport system. Initial receptor for the active transport of and chemotaxis toward maltooligosaccharides. The protein is Maltose-binding periplasmic protein (malE) of Photorhabdus luminescens (Xenorhabdus luminescens).